A 1430-amino-acid chain; its full sequence is DNA-directed RNA polymerase subunit beta' (1430 aa).

C70, C72, C85, and C88 together coordinate Zn(2+). Mg(2+) contacts are provided by D495, D497, and D499. Residues C838, C912, C919, and C922 each coordinate Zn(2+).

This sequence belongs to the RNA polymerase beta' chain family. As to quaternary structure, the RNAP catalytic core consists of 2 alpha, 1 beta, 1 beta' and 1 omega subunit. When a sigma factor is associated with the core the holoenzyme is formed, which can initiate transcription. Mg(2+) serves as cofactor. The cofactor is Zn(2+).

The catalysed reaction is RNA(n) + a ribonucleoside 5'-triphosphate = RNA(n+1) + diphosphate. In terms of biological role, DNA-dependent RNA polymerase catalyzes the transcription of DNA into RNA using the four ribonucleoside triphosphates as substrates. The polypeptide is DNA-directed RNA polymerase subunit beta' (Rhodospirillum centenum (strain ATCC 51521 / SW)).